The following is a 182-amino-acid chain: Large ribosomal subunit protein uL6 (182 aa).

Belongs to the universal ribosomal protein uL6 family. Part of the 50S ribosomal subunit.

Its function is as follows. This protein binds to the 23S rRNA, and is important in its secondary structure. It is located near the subunit interface in the base of the L7/L12 stalk, and near the tRNA binding site of the peptidyltransferase center. This chain is Large ribosomal subunit protein uL6, found in Dehalococcoides mccartyi (strain CBDB1).